Here is a 326-residue protein sequence, read N- to C-terminus: Tagatose 1,6-diphosphate aldolase 2 (326 aa).

This sequence belongs to the aldolase LacD family.

The enzyme catalyses D-tagatofuranose 1,6-bisphosphate = D-glyceraldehyde 3-phosphate + dihydroxyacetone phosphate. Its pathway is carbohydrate metabolism; D-tagatose 6-phosphate degradation; D-glyceraldehyde 3-phosphate and glycerone phosphate from D-tagatose 6-phosphate: step 2/2. The protein is Tagatose 1,6-diphosphate aldolase 2 (lacD2) of Streptococcus agalactiae serotype III (strain NEM316).